The sequence spans 183 residues: MNSIVNITPIIIILSEHSSEHTFGFNSDIFEANVINILLLLFGLIYVLKQSLGSTLNERQLKVLAAIQESEERLEQASSRLSESEKQLAQTQIIINQIKKEAQLTAEKVRSSILAQGQIDIERLAITGKSNIETAEKQIRRQIQQQIAFLALKKVTLQLENQMSSDIQLRIIDNNIAKLGDQL.

Residues 28-48 (DIFEANVINILLLLFGLIYVL) traverse the membrane as a helical segment.

Belongs to the ATPase B chain family. In terms of assembly, F-type ATPases have 2 components, F(1) - the catalytic core - and F(0) - the membrane proton channel. F(1) has five subunits: alpha(3), beta(3), gamma(1), delta(1), epsilon(1). F(0) has four main subunits: a(1), b(1), b'(1) and c(10-14). The alpha and beta chains form an alternating ring which encloses part of the gamma chain. F(1) is attached to F(0) by a central stalk formed by the gamma and epsilon chains, while a peripheral stalk is formed by the delta, b and b' chains.

It localises to the plastid. Its subcellular location is the chloroplast thylakoid membrane. Functionally, f(1)F(0) ATP synthase produces ATP from ADP in the presence of a proton or sodium gradient. F-type ATPases consist of two structural domains, F(1) containing the extramembraneous catalytic core and F(0) containing the membrane proton channel, linked together by a central stalk and a peripheral stalk. During catalysis, ATP synthesis in the catalytic domain of F(1) is coupled via a rotary mechanism of the central stalk subunits to proton translocation. Component of the F(0) channel, it forms part of the peripheral stalk, linking F(1) to F(0). This is ATP synthase subunit b, chloroplastic from Porphyra purpurea (Red seaweed).